The chain runs to 276 residues: Urease accessory protein UreD (276 aa).

This sequence belongs to the UreD family. In terms of assembly, ureD, UreF and UreG form a complex that acts as a GTP-hydrolysis-dependent molecular chaperone, activating the urease apoprotein by helping to assemble the nickel containing metallocenter of UreC. The UreE protein probably delivers the nickel.

It localises to the cytoplasm. Its function is as follows. Required for maturation of urease via the functional incorporation of the urease nickel metallocenter. In Polaromonas sp. (strain JS666 / ATCC BAA-500), this protein is Urease accessory protein UreD.